A 596-amino-acid chain; its full sequence is Alpha-1,3-galactosidase A (596 aa).

The signal sequence occupies residues 1–21 (MQNPVASLLFILAMLTGPCPA). The segment at 23–57 (DYPERTERTQSAGNHVWHIDPDKGNDGNPGTAPST) is disordered. 4 PbH1 repeats span residues 351-373 (RGKIIVKDCVLGASHDDAVNVHG), 482-504 (RKPVLVERCRFEKTGMPAILVED), 515-537 (VRNMTISRNTFIQCGEAVIQIVP), and 547-569 (HRNITITGNTFDLKNGTAIRIRH).

This sequence belongs to the glycosyl hydrolase 110 family. A subfamily.

The catalysed reaction is Hydrolysis of terminal, non-reducing branched (1-&gt;3)-alpha-D-galactosidic residues, producing free D-galactose.. It catalyses the reaction Hydrolysis of terminal, non-reducing alpha-D-galactose residues in alpha-D-galactosides, including galactose oligosaccharides, galactomannans and galactolipids.. In terms of biological role, alpha-galactosidase that specifically removes branched alpha-1,3-linked galactose residues present in blood group B antigens. Has no activity toward linear alpha-1,3-linked galactose residues. The polypeptide is Alpha-1,3-galactosidase A (glaA) (Akkermansia muciniphila (strain ATCC BAA-835 / DSM 22959 / JCM 33894 / BCRC 81048 / CCUG 64013 / CIP 107961 / Muc)).